Consider the following 73-residue polypeptide: RNA-binding protein Hfq (73 aa).

In terms of domain architecture, Sm spans 8–68 (DQFLNQIRKD…ISTFAPQKNV (61 aa)).

It belongs to the Hfq family. As to quaternary structure, homohexamer.

In terms of biological role, RNA chaperone that binds small regulatory RNA (sRNAs) and mRNAs to facilitate mRNA translational regulation in response to envelope stress, environmental stress and changes in metabolite concentrations. Also binds with high specificity to tRNAs. The chain is RNA-binding protein Hfq from Bacillus pumilus (strain SAFR-032).